Consider the following 360-residue polypeptide: Histidinol-phosphate aminotransferase (360 aa).

The residue at position 222 (Lys-222) is an N6-(pyridoxal phosphate)lysine.

Belongs to the class-II pyridoxal-phosphate-dependent aminotransferase family. Histidinol-phosphate aminotransferase subfamily. As to quaternary structure, homodimer. Pyridoxal 5'-phosphate serves as cofactor.

It catalyses the reaction L-histidinol phosphate + 2-oxoglutarate = 3-(imidazol-4-yl)-2-oxopropyl phosphate + L-glutamate. It functions in the pathway amino-acid biosynthesis; L-histidine biosynthesis; L-histidine from 5-phospho-alpha-D-ribose 1-diphosphate: step 7/9. The chain is Histidinol-phosphate aminotransferase from Listeria monocytogenes serotype 4b (strain CLIP80459).